Here is a 425-residue protein sequence, read N- to C-terminus: Glutamyl-tRNA reductase (425 aa).

Substrate-binding positions include 51 to 54 (TCNR), Ser-111, 116 to 118 (DMQ), and Gln-122. Catalysis depends on Cys-52, which acts as the Nucleophile. An NADP(+)-binding site is contributed by 191–196 (GLGEIG).

Belongs to the glutamyl-tRNA reductase family. In terms of assembly, homodimer.

The enzyme catalyses (S)-4-amino-5-oxopentanoate + tRNA(Glu) + NADP(+) = L-glutamyl-tRNA(Glu) + NADPH + H(+). It participates in porphyrin-containing compound metabolism; protoporphyrin-IX biosynthesis; 5-aminolevulinate from L-glutamyl-tRNA(Glu): step 1/2. Catalyzes the NADPH-dependent reduction of glutamyl-tRNA(Glu) to glutamate 1-semialdehyde (GSA). In Cytophaga hutchinsonii (strain ATCC 33406 / DSM 1761 / CIP 103989 / NBRC 15051 / NCIMB 9469 / D465), this protein is Glutamyl-tRNA reductase.